Reading from the N-terminus, the 556-residue chain is Formate--tetrahydrofolate ligase (556 aa).

65–72 (TPAGEGKT) is a binding site for ATP.

It belongs to the formate--tetrahydrofolate ligase family.

The enzyme catalyses (6S)-5,6,7,8-tetrahydrofolate + formate + ATP = (6R)-10-formyltetrahydrofolate + ADP + phosphate. It participates in one-carbon metabolism; tetrahydrofolate interconversion. The polypeptide is Formate--tetrahydrofolate ligase (Ruminiclostridium cellulolyticum (strain ATCC 35319 / DSM 5812 / JCM 6584 / H10) (Clostridium cellulolyticum)).